A 357-amino-acid chain; its full sequence is Protein-glutamate methylesterase/protein-glutamine glutaminase (357 aa).

The Response regulatory domain occupies Arg-3–Gln-120. Asp-54 is modified (4-aspartylphosphate). Residues Pro-161–Glu-355 form the CheB-type methylesterase domain. Catalysis depends on residues Ser-173, His-200, and Asp-296.

This sequence belongs to the CheB family. Post-translationally, phosphorylated by CheA. Phosphorylation of the N-terminal regulatory domain activates the methylesterase activity.

The protein resides in the cytoplasm. It carries out the reaction [protein]-L-glutamate 5-O-methyl ester + H2O = L-glutamyl-[protein] + methanol + H(+). The catalysed reaction is L-glutaminyl-[protein] + H2O = L-glutamyl-[protein] + NH4(+). Involved in the modulation of the chemotaxis system; catalyzes the demethylation of specific methylglutamate residues introduced into the chemoreceptors (methyl-accepting chemotaxis proteins) by CheR. B.subtilis has an effective methylation-independent adaptation system but must utilize the methylation system for adaptation to high concentrations of attractant. This chain is Protein-glutamate methylesterase/protein-glutamine glutaminase, found in Bacillus subtilis (strain 168).